The chain runs to 202 residues: Putative zinc finger protein ZK686.5 (202 aa).

The disordered stretch occupies residues 43-63 (RKNVDNTSTRKPYSYKDRKRK). C2H2-type zinc fingers lie at residues 110 to 133 (TYCE…GKVH), 138 to 160 (IECH…MKTH), and 169 to 192 (VQCE…DVSH).

The protein localises to the nucleus. In Caenorhabditis elegans, this protein is Putative zinc finger protein ZK686.5.